A 167-amino-acid polypeptide reads, in one-letter code: uncharacterized protein (167 aa).

4 helical membrane-spanning segments follow: residues 13-33 (LIYL…TWLI), 37-57 (VLAV…FLPY), 61-81 (WFAL…KIGE), and 103-123 (LLLI…LVPS).

The protein localises to the cell membrane. This is an uncharacterized protein from Haemophilus influenzae (strain ATCC 51907 / DSM 11121 / KW20 / Rd).